Here is a 144-residue protein sequence, read N- to C-terminus: Maximins 7/H6 (144 aa).

Residues 1-18 (MNFKYIVAVSFLIASAYA) form the signal peptide. The propeptide occupies 19–43 (RSEENDEQSLSQRDILEEESLREIR). N70 carries the post-translational modification Asparagine amide. Positions 74–123 (TAEDHEVMKRLEAVMRDLDSLDYPEEAAERETRGFNQEEIANLFTKKEKR) are excised as a propeptide. L143 is modified (leucine amide).

This sequence belongs to the bombinin family. Expressed by the skin glands.

It is found in the secreted. Its function is as follows. Maximin-7 shows antimicrobial activity against bacteria and against the fungus C.albicans. It has little hemolytic activity. Functionally, maximin-H6 shows antimicrobial activity against bacteria and against the fungus C.albicans. Shows strong hemolytic activity. This Bombina maxima (Giant fire-bellied toad) protein is Maximins 7/H6.